Consider the following 230-residue polypeptide: Flagellar L-ring protein (230 aa).

A signal peptide spans 1–21 (MMLKTVLRLPVCAALLALAAG). The N-palmitoyl cysteine moiety is linked to residue cysteine 22. The S-diacylglycerol cysteine moiety is linked to residue cysteine 22. The tract at residues 34–53 (PLTAPPPPPPQPSARPNGSI) is disordered. Residues 36–46 (TAPPPPPPQPS) are compositionally biased toward pro residues.

The protein belongs to the FlgH family. The basal body constitutes a major portion of the flagellar organelle and consists of four rings (L,P,S, and M) mounted on a central rod.

Its subcellular location is the cell outer membrane. It is found in the bacterial flagellum basal body. Its function is as follows. Assembles around the rod to form the L-ring and probably protects the motor/basal body from shearing forces during rotation. This is Flagellar L-ring protein from Bordetella parapertussis (strain 12822 / ATCC BAA-587 / NCTC 13253).